The following is a 365-amino-acid chain: Chorismate synthase (365 aa).

R46 lines the NADP(+) pocket. FMN-binding positions include 123-125 (RSS), 241-242 (NG), G281, 296-300 (KPTPS), and R322.

The protein belongs to the chorismate synthase family. In terms of assembly, homotetramer. The cofactor is FMNH2.

It carries out the reaction 5-O-(1-carboxyvinyl)-3-phosphoshikimate = chorismate + phosphate. It participates in metabolic intermediate biosynthesis; chorismate biosynthesis; chorismate from D-erythrose 4-phosphate and phosphoenolpyruvate: step 7/7. Catalyzes the anti-1,4-elimination of the C-3 phosphate and the C-6 proR hydrogen from 5-enolpyruvylshikimate-3-phosphate (EPSP) to yield chorismate, which is the branch point compound that serves as the starting substrate for the three terminal pathways of aromatic amino acid biosynthesis. This reaction introduces a second double bond into the aromatic ring system. The chain is Chorismate synthase from Helicobacter pylori (strain G27).